The following is a 182-amino-acid chain: Adenine phosphoribosyltransferase (182 aa).

It belongs to the purine/pyrimidine phosphoribosyltransferase family. As to quaternary structure, homodimer.

It localises to the cytoplasm. It carries out the reaction AMP + diphosphate = 5-phospho-alpha-D-ribose 1-diphosphate + adenine. It participates in purine metabolism; AMP biosynthesis via salvage pathway; AMP from adenine: step 1/1. Its function is as follows. Catalyzes a salvage reaction resulting in the formation of AMP, that is energically less costly than de novo synthesis. The protein is Adenine phosphoribosyltransferase of Renibacterium salmoninarum (strain ATCC 33209 / DSM 20767 / JCM 11484 / NBRC 15589 / NCIMB 2235).